We begin with the raw amino-acid sequence, 135 residues long: Probable transporter PD_1892 (135 aa).

4 consecutive transmembrane segments (helical) span residues 4-24 (YWYP…LLLL), 45-65 (AQNI…TVIF), 71-91 (VTVA…GLGT), and 114-134 (IVAT…MGVY).

It belongs to the TsuA/YedE (TC 9.B.102) family.

The protein resides in the cell inner membrane. This is Probable transporter PD_1892 from Xylella fastidiosa (strain Temecula1 / ATCC 700964).